Reading from the N-terminus, the 114-residue chain is Large ribosomal subunit protein bL20 (114 aa).

The protein belongs to the bacterial ribosomal protein bL20 family.

Its function is as follows. Binds directly to 23S ribosomal RNA and is necessary for the in vitro assembly process of the 50S ribosomal subunit. It is not involved in the protein synthesizing functions of that subunit. This is Large ribosomal subunit protein bL20 from Flavobacterium psychrophilum (strain ATCC 49511 / DSM 21280 / CIP 103535 / JIP02/86).